We begin with the raw amino-acid sequence, 519 residues long: Glutamate--cysteine ligase (519 aa).

This sequence belongs to the glutamate--cysteine ligase type 1 family. Type 1 subfamily.

It catalyses the reaction L-cysteine + L-glutamate + ATP = gamma-L-glutamyl-L-cysteine + ADP + phosphate + H(+). It participates in sulfur metabolism; glutathione biosynthesis; glutathione from L-cysteine and L-glutamate: step 1/2. This chain is Glutamate--cysteine ligase, found in Yersinia enterocolitica serotype O:8 / biotype 1B (strain NCTC 13174 / 8081).